The following is a 333-amino-acid chain: T-cell surface glycoprotein CD1c (333 aa).

An N-terminal signal peptide occupies residues 1 to 17; the sequence is MLFLQFLLLALLLPGGD. Topologically, residues 18–302 are extracellular; that stretch reads NADASQEHVS…ILYWGHHFSM (285 aa). Asn38, Asn70, Asn75, and Asn146 each carry an N-linked (GlcNAc...) asparagine glycan. 2 cysteine pairs are disulfide-bonded: Cys120-Cys185 and Cys225-Cys280. The region spanning 206–296 is the Ig-like domain; sequence PEAWLSSRPS…LGGQDIILYW (91 aa). Residues 303–323 traverse the membrane as a helical segment; that stretch reads NWIALVVIVPLVILIVLVLWF. At 324 to 333 the chain is on the cytoplasmic side; the sequence is KKHCSYQDIL. Positions 329–332 match the Internalization signal motif; sequence YQDI.

In terms of assembly, heterodimer with B2M (beta-2-microglobulin). In terms of tissue distribution, expressed on cortical thymocytes, on certain T-cell leukemias, and in various other tissues.

It localises to the cell membrane. The protein resides in the endosome membrane. Its subcellular location is the lysosome. In terms of biological role, antigen-presenting protein that binds self and non-self lipid and glycolipid antigens and presents them to T-cell receptors on natural killer T-cells. This chain is T-cell surface glycoprotein CD1c (CD1C), found in Homo sapiens (Human).